Reading from the N-terminus, the 371-residue chain is Alanine dehydrogenase (371 aa).

Substrate is bound by residues R15 and K74. H95 acts as the Proton donor/acceptor in catalysis. NAD(+) is bound by residues S133, 177-178, D197, S219, 238-239, 266-269, and 298-301; these read QA, VL, IAID, and VANM. D269 acts as the Proton donor/acceptor in catalysis.

This sequence belongs to the AlaDH/PNT family. As to quaternary structure, homohexamer. Trimer of dimer.

The catalysed reaction is L-alanine + NAD(+) + H2O = pyruvate + NH4(+) + NADH + H(+). Its pathway is amino-acid degradation; L-alanine degradation via dehydrogenase pathway; NH(3) and pyruvate from L-alanine: step 1/1. Functionally, catalyzes the reversible reductive amination of pyruvate to L-alanine. May play a role in cell wall synthesis as L-alanine is an important constituent of the peptidoglycan layer. The sequence is that of Alanine dehydrogenase (ald) from Staphylococcus epidermidis (strain ATCC 35984 / DSM 28319 / BCRC 17069 / CCUG 31568 / BM 3577 / RP62A).